The primary structure comprises 120 residues: MVQRLVYRSRHSYATKSNQHRIVKTPGGKLVYQTTKKRASGPKCPVTGKRIQGIPHLRPSEYKRSRLSRNRRTVNRAYGGVLSGSAVRERIIRAFLVEEQKIVKKVLKLQKAKEKVAPKA.

Residues 31–51 are disordered; that stretch reads VYQTTKKRASGPKCPVTGKRI.

This sequence belongs to the eukaryotic ribosomal protein eL34 family.

The protein is Large ribosomal subunit protein eL34z (RPL34A) of Arabidopsis thaliana (Mouse-ear cress).